Reading from the N-terminus, the 688-residue chain is Potassium-transporting ATPase ATP-binding subunit (688 aa).

4 consecutive transmembrane segments (helical) span residues 35-55, 62-82, 219-239, and 260-280; these read VMFVVYLGSGLTTILWIAMLA, ALFTGNIALWLWFTVLFANFA, IALTILLTALTIIFLLVCVTL, and VLIALLVCLIPTTIGGLLSAI. Catalysis depends on Asp313, which acts as the 4-aspartylphosphate intermediate. ATP contacts are provided by residues Asp350, Glu354, 383–390, and Lys401; that span reads FSAMTRMS. Mg(2+) contacts are provided by Asp524 and Asp528. Helical transmembrane passes span 594 to 614, 622 to 642, and 667 to 687; these read FAIIPAAFAVTYPQLNILNIM, AVLSTVIFNALIIVFLIPLAL, and GLIAPFIGIKLIDLLLTLLIL.

Belongs to the cation transport ATPase (P-type) (TC 3.A.3) family. Type IA subfamily. In terms of assembly, the system is composed of three essential subunits: KdpA, KdpB and KdpC.

The protein resides in the cell inner membrane. The catalysed reaction is K(+)(out) + ATP + H2O = K(+)(in) + ADP + phosphate + H(+). In terms of biological role, part of the high-affinity ATP-driven potassium transport (or Kdp) system, which catalyzes the hydrolysis of ATP coupled with the electrogenic transport of potassium into the cytoplasm. This subunit is responsible for energy coupling to the transport system and for the release of the potassium ions to the cytoplasm. The chain is Potassium-transporting ATPase ATP-binding subunit from Photorhabdus laumondii subsp. laumondii (strain DSM 15139 / CIP 105565 / TT01) (Photorhabdus luminescens subsp. laumondii).